The sequence spans 474 residues: Bifunctional protein HldE (474 aa).

The interval 1–317 is ribokinase; that stretch reads MKLSMPRFDQ…RRAIQRSEGS (317 aa). 194 to 197 contacts ATP; the sequence is NLSE. Aspartate 263 is a catalytic residue. Residues 343–474 are cytidylyltransferase; the sequence is FTNGCFDILH…AIVEKIRNNE (132 aa).

The protein in the N-terminal section; belongs to the carbohydrate kinase PfkB family. In the C-terminal section; belongs to the cytidylyltransferase family. Homodimer.

It carries out the reaction D-glycero-beta-D-manno-heptose 7-phosphate + ATP = D-glycero-beta-D-manno-heptose 1,7-bisphosphate + ADP + H(+). It catalyses the reaction D-glycero-beta-D-manno-heptose 1-phosphate + ATP + H(+) = ADP-D-glycero-beta-D-manno-heptose + diphosphate. The protein operates within nucleotide-sugar biosynthesis; ADP-L-glycero-beta-D-manno-heptose biosynthesis; ADP-L-glycero-beta-D-manno-heptose from D-glycero-beta-D-manno-heptose 7-phosphate: step 1/4. It participates in nucleotide-sugar biosynthesis; ADP-L-glycero-beta-D-manno-heptose biosynthesis; ADP-L-glycero-beta-D-manno-heptose from D-glycero-beta-D-manno-heptose 7-phosphate: step 3/4. Functionally, catalyzes the phosphorylation of D-glycero-D-manno-heptose 7-phosphate at the C-1 position to selectively form D-glycero-beta-D-manno-heptose-1,7-bisphosphate. Its function is as follows. Catalyzes the ADP transfer from ATP to D-glycero-beta-D-manno-heptose 1-phosphate, yielding ADP-D-glycero-beta-D-manno-heptose. This chain is Bifunctional protein HldE, found in Pseudomonas fluorescens (strain SBW25).